We begin with the raw amino-acid sequence, 103 residues long: Cell division protein FtsB (103 aa).

The Cytoplasmic segment spans residues 1–3 (MGK). The chain crosses the membrane as a helical span at residues 4–21 (LTLLLLALLVWLQYSLWF). At 22-103 (GKNGIHDYSR…RAQTAGQNNR (82 aa)) the chain is on the periplasmic side. Residues 33-62 (NDDVVAQQATNAKLKARNDQLFAEIDDLNG) adopt a coiled-coil conformation.

This sequence belongs to the FtsB family. In terms of assembly, part of a complex composed of FtsB, FtsL and FtsQ.

Its subcellular location is the cell inner membrane. In terms of biological role, essential cell division protein. May link together the upstream cell division proteins, which are predominantly cytoplasmic, with the downstream cell division proteins, which are predominantly periplasmic. This Salmonella arizonae (strain ATCC BAA-731 / CDC346-86 / RSK2980) protein is Cell division protein FtsB.